The chain runs to 174 residues: Protein RESISTANCE TO POWDERY MILDEW 8.2 (174 aa).

One can recognise an RPW8 domain in the interval 1–153 (MIAEVAAGGA…IMPQPKFEIH (153 aa)). The chain crosses the membrane as a helical span at residues 7–23 (AGGALGLALSVLHEAVK). Positions 68 to 145 (VNKRLKLLLE…EISTKLDKIM (78 aa)) form a coiled coil.

The protein belongs to the plant RPW8 protein family.

It is found in the membrane. Its function is as follows. Disease resistance (R) protein that induces localized, salicylic acid-dependent defenses. Confers resistance to powdery mildew (e.g. Erysiphe cichoracearum UCSC1). The chain is Protein RESISTANCE TO POWDERY MILDEW 8.2 from Arabidopsis thaliana (Mouse-ear cress).